Reading from the N-terminus, the 456-residue chain is Proline--tRNA ligase (456 aa).

Belongs to the class-II aminoacyl-tRNA synthetase family. ProS type 3 subfamily. As to quaternary structure, homodimer.

The protein localises to the cytoplasm. The enzyme catalyses tRNA(Pro) + L-proline + ATP = L-prolyl-tRNA(Pro) + AMP + diphosphate. Functionally, catalyzes the attachment of proline to tRNA(Pro) in a two-step reaction: proline is first activated by ATP to form Pro-AMP and then transferred to the acceptor end of tRNA(Pro). The polypeptide is Proline--tRNA ligase (Methanococcus aeolicus (strain ATCC BAA-1280 / DSM 17508 / OCM 812 / Nankai-3)).